Here is a 190-residue protein sequence, read N- to C-terminus: NADH dehydrogenase [ubiquinone] iron-sulfur protein 3 (190 aa).

It belongs to the complex I 30 kDa subunit family. Complex I is composed of at least 49 different subunits. This is a component of the iron-sulfur (IP) fragment of the enzyme.

It localises to the mitochondrion inner membrane. The enzyme catalyses a ubiquinone + NADH + 5 H(+)(in) = a ubiquinol + NAD(+) + 4 H(+)(out). Functionally, core subunit of the mitochondrial membrane respiratory chain NADH dehydrogenase (Complex I) that is believed to belong to the minimal assembly required for catalysis. Complex I functions in the transfer of electrons from NADH to the respiratory chain. The immediate electron acceptor for the enzyme is believed to be ubiquinone. This Arabidopsis thaliana (Mouse-ear cress) protein is NADH dehydrogenase [ubiquinone] iron-sulfur protein 3 (NAD9).